The following is a 359-amino-acid chain: MERYELLKDIGAGNFGVARLMRNKETKELVAMKYIPRGLKIDENVAREIINHRSLRHPNIIRFKEVVVTPTHLAIVMEYAAGGELFDRICNAGRFSEDEARYFFQQLICGVSYCHFMQICHRDLKLENTLLDGSPAPRLKICDFGYSKSSLLHSKPKSTVGTPAYIAPEVLSRREYDGKTADVWSCGVTLYVMLVGAYPFEDPDDPKNFRKTIGRIMSIQYKIPEYVHVSQDCRQLLSRIFVANPAKRITIREIRNHPWFLKNLPRELTEAAQAMYYKKDNSAPTYSVQSVEEIMKIVEEARTPPRSSTPVAGFGWQEEDEQEDNSKKPEEEQEEEEDAEDEYDKQVKQVHASGEFQLS.

Residues 4-260 (YELLKDIGAG…IREIRNHPWF (257 aa)) enclose the Protein kinase domain. ATP is bound by residues 10–18 (IGAGNFGVA) and Lys33. The active-site Proton acceptor is Asp123. Residues 299–359 (EEARTPPRSS…VHASGEFQLS (61 aa)) are disordered. Residues 331-343 (EEQEEEEDAEDEY) show a composition bias toward acidic residues.

This sequence belongs to the protein kinase superfamily. Ser/Thr protein kinase family. In terms of processing, may be phosphorylated. Weakly expressed in roots. Expressed in roots of young seedlings.

It localises to the cytoplasm. Its subcellular location is the nucleus. It catalyses the reaction L-seryl-[protein] + ATP = O-phospho-L-seryl-[protein] + ADP + H(+). The catalysed reaction is L-threonyl-[protein] + ATP = O-phospho-L-threonyl-[protein] + ADP + H(+). Its activity is regulated as follows. Activated by hyperosmotic stress. In terms of biological role, may play a role in signal transduction of hyperosmotic response. This Oryza sativa subsp. japonica (Rice) protein is Serine/threonine-protein kinase SAPK7 (SAPK7).